Here is a 113-residue protein sequence, read N- to C-terminus: MTRPTIPPGPPGAEGRTQTLERTETKKPRLWRVLLLNDDYTPMDYVVQVLEQFFRKTEQEAELIMLAVHHKGQGVAGVYTRDVAETKVAQVTAHAQREGHPLRVVAEPESEGE.

Residues 1 to 11 show a composition bias toward pro residues; sequence MTRPTIPPGPP. 2 disordered regions span residues 1-24 and 92-113; these read MTRP…ERTE and TAHA…SEGE.

Belongs to the ClpS family. As to quaternary structure, binds to the N-terminal domain of the chaperone ClpA.

In terms of biological role, involved in the modulation of the specificity of the ClpAP-mediated ATP-dependent protein degradation. This is ATP-dependent Clp protease adapter protein ClpS from Deinococcus radiodurans (strain ATCC 13939 / DSM 20539 / JCM 16871 / CCUG 27074 / LMG 4051 / NBRC 15346 / NCIMB 9279 / VKM B-1422 / R1).